Here is a 318-residue protein sequence, read N- to C-terminus: Small ribosomal subunit biogenesis GTPase RsgA (318 aa).

The 165-residue stretch at 82–246 (RQDEIRTKSF…LIDSPGFQEF (165 aa)) folds into the CP-type G domain. Residues 132–135 (NKSD) and 186–194 (GPSGAGKST) each bind GTP. Zn(2+) contacts are provided by C270, C275, H277, and C283.

This sequence belongs to the TRAFAC class YlqF/YawG GTPase family. RsgA subfamily. As to quaternary structure, monomer. Associates with 30S ribosomal subunit, binds 16S rRNA. Zn(2+) serves as cofactor.

Its subcellular location is the cytoplasm. One of several proteins that assist in the late maturation steps of the functional core of the 30S ribosomal subunit. Helps release RbfA from mature subunits. May play a role in the assembly of ribosomal proteins into the subunit. Circularly permuted GTPase that catalyzes slow GTP hydrolysis, GTPase activity is stimulated by the 30S ribosomal subunit. This Variovorax paradoxus (strain S110) protein is Small ribosomal subunit biogenesis GTPase RsgA.